Consider the following 558-residue polypeptide: Transcription termination factor MTEF18, mitochondrial (558 aa).

Residues 1–58 (MFMVRLKFASISHNFSTVAAKHRRVPSKYKSLAIGKAQQAITDYLHTTRSLSYTHAEQ) constitute a mitochondrion transit peptide.

The protein belongs to the mTERF family.

Its subcellular location is the mitochondrion. In terms of biological role, transcription termination factor involved in the regulation of mitochondrial-encoded gene expression. Essential for normal plant growth and development. This chain is Transcription termination factor MTEF18, mitochondrial, found in Arabidopsis thaliana (Mouse-ear cress).